A 474-amino-acid polypeptide reads, in one-letter code: Glutamate--tRNA ligase (474 aa).

Residues 9-19 carry the 'HIGH' region motif; the sequence is PSPTGYLHVGG. Positions 240–244 match the 'KMSKS' region motif; sequence KLSKR. Lys-243 is a binding site for ATP.

Belongs to the class-I aminoacyl-tRNA synthetase family. Glutamate--tRNA ligase type 1 subfamily. In terms of assembly, monomer.

It is found in the cytoplasm. It carries out the reaction tRNA(Glu) + L-glutamate + ATP = L-glutamyl-tRNA(Glu) + AMP + diphosphate. Its function is as follows. Catalyzes the attachment of glutamate to tRNA(Glu) in a two-step reaction: glutamate is first activated by ATP to form Glu-AMP and then transferred to the acceptor end of tRNA(Glu). The sequence is that of Glutamate--tRNA ligase from Vibrio parahaemolyticus serotype O3:K6 (strain RIMD 2210633).